A 336-amino-acid polypeptide reads, in one-letter code: Glyceraldehyde-3-phosphate dehydrogenase (336 aa).

NAD(+) contacts are provided by residues 12-13 (RI), Asp-34, Arg-78, and Thr-121. D-glyceraldehyde 3-phosphate-binding positions include 151–153 (SCT), Thr-182, Arg-199, 212–213 (TG), and Arg-235. Cys-152 functions as the Nucleophile in the catalytic mechanism. Asn-316 serves as a coordination point for NAD(+).

It belongs to the glyceraldehyde-3-phosphate dehydrogenase family. As to quaternary structure, homotetramer.

It is found in the cytoplasm. It carries out the reaction D-glyceraldehyde 3-phosphate + phosphate + NAD(+) = (2R)-3-phospho-glyceroyl phosphate + NADH + H(+). The protein operates within carbohydrate degradation; glycolysis; pyruvate from D-glyceraldehyde 3-phosphate: step 1/5. Its function is as follows. Catalyzes the oxidative phosphorylation of glyceraldehyde 3-phosphate (G3P) to 1,3-bisphosphoglycerate (BPG) using the cofactor NAD. The first reaction step involves the formation of a hemiacetal intermediate between G3P and a cysteine residue, and this hemiacetal intermediate is then oxidized to a thioester, with concomitant reduction of NAD to NADH. The reduced NADH is then exchanged with the second NAD, and the thioester is attacked by a nucleophilic inorganic phosphate to produce BPG. This chain is Glyceraldehyde-3-phosphate dehydrogenase (gap), found in Streptococcus pyogenes serotype M1.